The primary structure comprises 434 residues: [Pyruvate dehydrogenase (acetyl-transferring)] kinase isozyme 1, mitochondrial (434 aa).

Residues 1-26 constitute a mitochondrion transit peptide; the sequence is MRLARLLRGGTSVRPLCAVPCASRSL. Phosphotyrosine; by FGFR1 is present on Y136. Residues 161–391 form the Histidine kinase domain; it reads TEYKESFGVD…DAVIYIKALS (231 aa). Position 241 is a phosphotyrosine; by FGFR1, ABL1, FLT3 and JAK2 (Y241). Y242 is subject to Phosphotyrosine; by FGFR1. ATP is bound by residues 277 to 284, D316, 335 to 336, and 352 to 357; these read ELFKNAMR, ST, and GFGYGL. T336 carries the phosphothreonine modification. Position 403 is an N6-succinyllysine (K403).

This sequence belongs to the PDK/BCKDK protein kinase family. In terms of assembly, homodimer, and heterodimer with PDK2. Interacts with the pyruvate dehydrogenase complex subunit DLAT, and is part of the multimeric pyruvate dehydrogenase complex that contains multiple copies of pyruvate dehydrogenase (E1), dihydrolipoamide acetyltransferase (DLAT, E2) and lipoamide dehydrogenase (DLD, E3). Interacts with phosphoglycerate kinase PGK1; the interaction is direct, occurs under hypoxic conditions and leads to PDK1-mediated inhibition of pyruvate dehydrogenase complex activity. In terms of processing, phosphorylated by constitutively activated ABL1, FGFR1, FLT3 and JAK2 (in vitro), and this may also occur in cancer cells that express constitutively activated ABL1, FGFR1, FLT3 and JAK2. Phosphorylation at Tyr-241 and Tyr-242 strongly increases kinase activity, while phosphorylation at Tyr-136 has a lesser effect. Phosphorylated under hypoxic conditions at Thr-336 by phosphoglycerate kinase PGK1 which has an activating effect.

The protein resides in the mitochondrion matrix. It carries out the reaction L-seryl-[pyruvate dehydrogenase E1 alpha subunit] + ATP = O-phospho-L-seryl-[pyruvate dehydrogenase E1 alpha subunit] + ADP + H(+). In terms of biological role, kinase that plays a key role in regulation of glucose and fatty acid metabolism and homeostasis via phosphorylation of the pyruvate dehydrogenase subunits PDHA1 and PDHA2. This inhibits pyruvate dehydrogenase activity, and thereby regulates metabolite flux through the tricarboxylic acid cycle, down-regulates aerobic respiration and inhibits the formation of acetyl-coenzyme A from pyruvate. Plays an important role in cellular responses to hypoxia and is important for cell proliferation under hypoxia. The polypeptide is [Pyruvate dehydrogenase (acetyl-transferring)] kinase isozyme 1, mitochondrial (Pdk1) (Mus musculus (Mouse)).